The following is a 194-amino-acid chain: CASP-like protein 2C2 (194 aa).

Topologically, residues 1–27 are cytoplasmic; it reads MAAGQPRPPPPPSSVRTERVLRAACAA. Residues 28-48 traverse the membrane as a helical segment; the sequence is MAAAGALLLGFSAETKTVIFV. Residues 49–58 lie on the Extracellular side of the membrane; that stretch reads QKKAVPKDVQ. Residues 59–79 traverse the membrane as a helical segment; it reads ALWVLIVAAAAAAAYHAAQLA. The Cytoplasmic segment spans residues 80–113; that stretch reads RCLCMDRLAGGGGGCRRLRRAVACATFLLDKGCA. The chain crosses the membrane as a helical span at residues 114 to 134; that stretch reads YMVLATTVAALQACFVGLLGV. The Extracellular segment spans residues 135-152; that stretch reads EALQWSKLCNIYTRFCEQ. The helical transmembrane segment at 153-173 threads the bilayer; that stretch reads AAAGMVCSLVAAAGMAVLSAF. Residues 174–194 lie on the Cytoplasmic side of the membrane; the sequence is SARDLFRRRRPCSPCVQVQQV.

The protein belongs to the Casparian strip membrane proteins (CASP) family. Homodimer and heterodimers.

It is found in the cell membrane. The chain is CASP-like protein 2C2 from Sorghum bicolor (Sorghum).